The following is a 259-amino-acid chain: uncharacterized protein (259 aa).

An ABC transporter domain is found at 4–243 (INLKNINLTR…KILTDFYQEK (240 aa)). 36–43 (GLNGSGKS) contributes to the ATP binding site.

The protein belongs to the ABC transporter superfamily.

This is an uncharacterized protein from Lactococcus lactis subsp. lactis (strain IL1403) (Streptococcus lactis).